The sequence spans 46 residues: Transcriptional regulator SEHBP (46 aa).

As to quaternary structure, interacts with histone H2B. Also interacts with chromatin-binding proteins HMGN1 and HMGN3.

The protein resides in the nucleus. The protein localises to the cytoplasm. Its function is as follows. Plays a role in transcription regulation. This Homo sapiens (Human) protein is Transcriptional regulator SEHBP.